The sequence spans 955 residues: Protein translocase subunit SecA (955 aa).

Residues Gln90, 108–112 (GEGKT), and Asp509 each bind ATP. The interval 537–571 (EGHRPPVPLQRSGAEGGGGFAAKAAPASGPHGHAP) is disordered. A compositionally biased stretch (low complexity) spans 557 to 571 (AAKAAPASGPHGHAP).

This sequence belongs to the SecA family. As to quaternary structure, monomer and homodimer. Part of the essential Sec protein translocation apparatus which comprises SecA, SecYEG and auxiliary proteins SecDF. Other proteins may also be involved.

The protein localises to the cell inner membrane. It localises to the cellular thylakoid membrane. Its subcellular location is the cytoplasm. It catalyses the reaction ATP + H2O + cellular proteinSide 1 = ADP + phosphate + cellular proteinSide 2.. In terms of biological role, part of the Sec protein translocase complex. Interacts with the SecYEG preprotein conducting channel. Has a central role in coupling the hydrolysis of ATP to the transfer of proteins into and across the cell membrane, serving as an ATP-driven molecular motor driving the stepwise translocation of polypeptide chains across the membrane. Functionally, probably participates in protein translocation into and across both the cytoplasmic and thylakoid membranes in cyanobacterial cells. The polypeptide is Protein translocase subunit SecA (Synechococcus sp. (strain WH7803)).